A 292-amino-acid polypeptide reads, in one-letter code: Small ribosomal subunit protein uS5 (292 aa).

Positions 1–56 are disordered; it reads MADDAGAAGGPGGPGGPGMGGRGGFRGGFGSGIRGRGRGRGRGRGRGRGARGGKAE. A2 is subject to N-acetylalanine. Over residues 7–34 the composition is skewed to gly residues; sequence AAGGPGGPGGPGMGGRGGFRGGFGSGIR. The span at 35 to 51 shows a compositional bias: basic residues; that stretch reads GRGRGRGRGRGRGRGAR. Residues K54 and K58 each participate in a glycyl lysine isopeptide (Lys-Gly) (interchain with G-Cter in ubiquitin) cross-link. The 64-residue stretch at 102–165 folds into the S5 DRBM domain; the sequence is LKDEVLKIMP…ILAKLSIVPV (64 aa). T251 is modified (phosphothreonine). K262 is subject to N6-acetyllysine. At S263 the chain carries Phosphoserine. Position 269 is a phosphothreonine (T269). An N6-acetyllysine; alternate modification is found at K274. K274 is covalently cross-linked (Glycyl lysine isopeptide (Lys-Gly) (interchain with G-Cter in SUMO1); alternate). A Glycyl lysine isopeptide (Lys-Gly) (interchain with G-Cter in SUMO2); alternate cross-link involves residue K274. K274 is covalently cross-linked (Glycyl lysine isopeptide (Lys-Gly) (interchain with G-Cter in ubiquitin); alternate). Residue S280 is modified to Phosphoserine.

This sequence belongs to the universal ribosomal protein uS5 family. In terms of assembly, component of the small ribosomal subunit. Interacts with zinc finger protein ZNF277 (via zinc-finger domains); the interaction is direct; the interaction is extra-ribosomal. Interaction with ZNF277 competes with the binding of RPS2 to protein arginine methyltransferase PRMT3. Citrullinated by PADI4 in the Arg/Gly-rich region. In terms of processing, asymmetric arginine dimethylation by PRMT3 occurs at multiple sites in the Arg/Gly-rich region. Post-translationally, monoubiquitinated at Lys-54 and Lys-58 by RNF10 when a ribosome has stalled during translation, leading to its degradation by the proteasome. Deubiquitinated at Lys-54 and Lys-58 by USP10, preventing degradation by the proteasome and promoting 40S ribosome subunit recycling following ribosome dissociation.

It localises to the cytoplasm. Its subcellular location is the nucleus. It is found in the nucleolus. Functionally, component of the ribosome, a large ribonucleoprotein complex responsible for the synthesis of proteins in the cell. The small ribosomal subunit (SSU) binds messenger RNAs (mRNAs) and translates the encoded message by selecting cognate aminoacyl-transfer RNA (tRNA) molecules. The large subunit (LSU) contains the ribosomal catalytic site termed the peptidyl transferase center (PTC), which catalyzes the formation of peptide bonds, thereby polymerizing the amino acids delivered by tRNAs into a polypeptide chain. The nascent polypeptides leave the ribosome through a tunnel in the LSU and interact with protein factors that function in enzymatic processing, targeting, and the membrane insertion of nascent chains at the exit of the ribosomal tunnel. Plays a role in the assembly and function of the 40S ribosomal subunit. The sequence is that of Small ribosomal subunit protein uS5 (RPS2) from Oryctolagus cuniculus (Rabbit).